A 287-amino-acid chain; its full sequence is Ferredoxin-type protein NapH (287 aa).

Residues 1 to 29 (MANRKRDAGREALEKKGWWRSHRWLVLRR) are Cytoplasmic-facing. Residues 30–50 (LCQFFVLGMFLSGPWFGVWIL) form a helical membrane-spanning segment. The Periplasmic portion of the chain corresponds to 51–79 (HGNYSSSLLFDTVPLTDPLMTLQSLASGH). The helical transmembrane segment at 80–100 (LPATVALTGAVIITVLYALAG) threads the bilayer. Residues 101–139 (KRLFCSWVCPLNPITDLANWLRRRFDLNQSATIPRHIRY) lie on the Cytoplasmic side of the membrane. Residues 140–160 (VLLVVILVGSALTGTLIWEWI) traverse the membrane as a helical segment. Over 161-170 (NPVSLMGRSL) the chain is Periplasmic. A helical membrane pass occupies residues 171–191 (VMGFGSGALLILALFLFDLLV). Residues 192-287 (VEHGWCGHIC…TTRWSSGAKS (96 aa)) lie on the Cytoplasmic side of the membrane. 2 consecutive 4Fe-4S ferredoxin-type domains span residues 217 to 247 (TVAATDRQKCNRCMDCFHVCPEPHVLRAPVL) and 251 to 280 (SPVQVTSRDCMTCGRCVDVCSEDVFTITTR). 8 residues coordinate [4Fe-4S] cluster: Cys-226, Cys-229, Cys-232, Cys-236, Cys-260, Cys-263, Cys-266, and Cys-270.

In terms of assembly, interacts with NapC. [4Fe-4S] cluster serves as cofactor.

Its subcellular location is the cell inner membrane. Required for electron transfer from ubiquinol, via NapC, to the periplasmic nitrate reductase NapAB complex. The protein is Ferredoxin-type protein NapH (napH) of Escherichia coli (strain K12).